Consider the following 202-residue polypeptide: MIAYVEGRLAEVAGNACVVVTDGGVGYEVFVPGHTLARLPDKGGRVSFFISTEVREDALELYGFATWDERQTFIVLTSISKVGAKTGLAILSQFRPDDLRRLVVEDDVLALTRVSGIGKKTAQHIFLELKYKLKVEDLPAAAPLVTGGAPGGVFRDALAGLANLGYGEEEASHVLKDVLHGEPDLDVGGALRAALRALARGR.

Residues 1 to 65 (MIAYVEGRLA…EDALELYGFA (65 aa)) form a domain I region. Positions 66-144 (TWDERQTFIV…VEDLPAAAPL (79 aa)) are domain II. The interval 145 to 155 (VTGGAPGGVFR) is flexible linker. The tract at residues 155–202 (RDALAGLANLGYGEEEASHVLKDVLHGEPDLDVGGALRAALRALARGR) is domain III.

Belongs to the RuvA family. In terms of assembly, homotetramer. Forms an RuvA(8)-RuvB(12)-Holliday junction (HJ) complex. HJ DNA is sandwiched between 2 RuvA tetramers; dsDNA enters through RuvA and exits via RuvB. An RuvB hexamer assembles on each DNA strand where it exits the tetramer. Each RuvB hexamer is contacted by two RuvA subunits (via domain III) on 2 adjacent RuvB subunits; this complex drives branch migration. In the full resolvosome a probable DNA-RuvA(4)-RuvB(12)-RuvC(2) complex forms which resolves the HJ.

It is found in the cytoplasm. Its function is as follows. The RuvA-RuvB-RuvC complex processes Holliday junction (HJ) DNA during genetic recombination and DNA repair, while the RuvA-RuvB complex plays an important role in the rescue of blocked DNA replication forks via replication fork reversal (RFR). RuvA specifically binds to HJ cruciform DNA, conferring on it an open structure. The RuvB hexamer acts as an ATP-dependent pump, pulling dsDNA into and through the RuvAB complex. HJ branch migration allows RuvC to scan DNA until it finds its consensus sequence, where it cleaves and resolves the cruciform DNA. The sequence is that of Holliday junction branch migration complex subunit RuvA from Nitratidesulfovibrio vulgaris (strain ATCC 29579 / DSM 644 / CCUG 34227 / NCIMB 8303 / VKM B-1760 / Hildenborough) (Desulfovibrio vulgaris).